We begin with the raw amino-acid sequence, 579 residues long: uncharacterized protein (579 aa).

12 helical membrane passes run 20–40, 54–74, 86–106, 142–162, 174–194, 204–224, 234–254, 279–299, 310–330, 335–355, 366–386, and 467–487; these read ALWAMMVGFFMIMLDSTVVAI, ATVVWVTSAYLLAYAVPMLVA, LYLIGLGVFTVASLGCGLSSG, GVALGAWGTVASVASLVGPLA, WIFFVNVPVGVIGLILAAYLI, FDWFGVGLSGAGMFLIVFGLQ, WIWAVIVGGIGFMSLFVYWQA, IAIIAFAGTGMMLPVTFYAQA, VLFAPTAIVGGVLAPFVGMII, PLCVLGFGFSVLAIAMTWLLC, LVLPFIALGVAGAFVWSPLTV, and MLLPAFVALFGIVAALFLVDF. The segment at 516-579 is disordered; the sequence is REPEEDCDTQ…DTESTAPSAL (64 aa). Low complexity predominate over residues 526-540; the sequence is PLRASRPAAAAASRS. Polar residues predominate over residues 570 to 579; it reads DTESTAPSAL.

The protein belongs to the major facilitator superfamily. EmrB family.

It is found in the cell membrane. This is an uncharacterized protein from Mycobacterium tuberculosis (strain ATCC 25618 / H37Rv).